The primary structure comprises 291 residues: Filament protein FIN1 (291 aa).

Serine 54 is modified (phosphoserine). At threonine 68 the chain carries Phosphothreonine. A phosphoserine mark is found at serine 74 and serine 88. The stretch at 254-284 forms a coiled coil; sequence VELKEIKDLLLQMLRRQREIESRLSNIELQL.

Homooligomer; in vitro, FIN1 self-assembles into 10 nm diameter filaments. Interacts with the 14-3-3 proteins BMH1 and BMH2, and the protein phosphatase 1 complex catalytic subunit GLC7. In terms of processing, phosphorylated by CDC28. Phosphorylation is required for BMH1 and BMH2 interaction. Dephosphorylation by GLC7 depends on the presence of BMH1 and BMH2.

It is found in the nucleus. The protein resides in the cytoplasm. It localises to the cytoskeleton. Its subcellular location is the spindle pole. In terms of biological role, forms cell-cycle specific filaments between the spindle pole bodies of dividing yeast cells. This is Filament protein FIN1 (FIN1) from Saccharomyces cerevisiae (strain ATCC 204508 / S288c) (Baker's yeast).